The following is a 382-amino-acid chain: Neuropeptide Y receptor type 2 (382 aa).

The tract at residues 1–39 (MGPIGAEADENQTVEEMKMEPSGPGHTTPRGELAPDSEP) is disordered. Residues 1-46 (MGPIGAEADENQTVEEMKMEPSGPGHTTPRGELAPDSEPELKDSTK) lie on the Extracellular side of the membrane. The N-linked (GlcNAc...) asparagine glycan is linked to Asn11. Residues 47-67 (LIEVQIILILAYCSIILLGVV) traverse the membrane as a helical segment. The Cytoplasmic portion of the chain corresponds to 68-87 (GNSLVIHVVIKFKSMRTVTN). Residues 88–108 (FFIANLAVADLLVNTLCLPFT) form a helical membrane-spanning segment. Residues 109–125 (LTYTLMGEWKMGPVLCH) are Extracellular-facing. An intrachain disulfide couples Cys124 to Cys204. The chain crosses the membrane as a helical span at residues 126–146 (LVPYAQGLAVQVSTITLTVIA). Over 147 to 166 (LDRHRCIVYHLESKISKRIS) the chain is Cytoplasmic. A helical membrane pass occupies residues 167 to 187 (FLIIGLAWGISALLASPLAIF). Topologically, residues 188 to 217 (REYSLIEIIPDFEIVACTEKWPGEEKSIYG) are extracellular. A helical transmembrane segment spans residues 218-238 (TVYSLSSLLILYVLPLGIISF). Residues 239–269 (SYARIWSKLKNHVSPGGVNDHYHQRRQKTTK) are Cytoplasmic-facing. A helical membrane pass occupies residues 270-290 (MLVCVVVVFAVSWLPLHAFQL). Residues 291–305 (AVDIDSQVLDLKEYK) are Extracellular-facing. A helical membrane pass occupies residues 306–326 (LIFTVFHIIAMCSTFANPLLY). Over 327–382 (GWMNSNYRKAFLSAFRCEQRLDAIHSEVSMTSKAKKNLEATKNGGPDDSFTEATNV) the chain is Cytoplasmic. A lipid anchor (S-palmitoyl cysteine) is attached at Cys343. A disordered region spans residues 363–382 (NLEATKNGGPDDSFTEATNV).

This sequence belongs to the G-protein coupled receptor 1 family.

Its subcellular location is the cell membrane. In terms of biological role, receptor for neuropeptide Y and peptide YY. In Sus scrofa (Pig), this protein is Neuropeptide Y receptor type 2 (NPY2R).